The primary structure comprises 175 residues: ATP synthase subunit b (175 aa).

A helical transmembrane segment spans residues 22–42 (LNLLETNIINIAIVFGLLIFL).

Belongs to the ATPase B chain family. In terms of assembly, F-type ATPases have 2 components, F(1) - the catalytic core - and F(0) - the membrane proton channel. F(1) has five subunits: alpha(3), beta(3), gamma(1), delta(1), epsilon(1). F(0) has four main subunits: a(1), b(1), b'(1) and c(10-14). The alpha and beta chains form an alternating ring which encloses part of the gamma chain. F(1) is attached to F(0) by a central stalk formed by the gamma and epsilon chains, while a peripheral stalk is formed by the delta, b and b' chains.

Its subcellular location is the cell inner membrane. Its function is as follows. F(1)F(0) ATP synthase produces ATP from ADP in the presence of a proton or sodium gradient. F-type ATPases consist of two structural domains, F(1) containing the extramembraneous catalytic core and F(0) containing the membrane proton channel, linked together by a central stalk and a peripheral stalk. During catalysis, ATP synthesis in the catalytic domain of F(1) is coupled via a rotary mechanism of the central stalk subunits to proton translocation. In terms of biological role, component of the F(0) channel, it forms part of the peripheral stalk, linking F(1) to F(0). The polypeptide is ATP synthase subunit b (Gloeobacter violaceus (strain ATCC 29082 / PCC 7421)).